Reading from the N-terminus, the 437-residue chain is Transcription factor E2F2 (437 aa).

The cyclin A/CDK2 binding stretch occupies residues 65-105 (ATPHGPEGQVVRCLPAGRLPAKRKLDLEGIGRPVVPEFPTP). A DNA-binding region spans residues 107–196 (GKCIRVDGLP…KNNIQWVGRG (90 aa)). The tract at residues 155–176 (LNWAAEVLDVQKRRIYDITNVL) is leucine-zipper. The short motif at 160-196 (EVLDVQKRRIYDITNVLEGIQLIRKKAKNNIQWVGRG) is the DEF box element. Residues 197-289 (MFEDPTRPGK…PDRTEDNLQI (93 aa)) are dimerization. The tract at residues 307–368 (VQEPDSPSEE…APPPPSLVPL (62 aa)) is disordered. The segment covering 315 to 330 (EEPLPSTSTLCPSPDS) has biased composition (low complexity). Over residues 351-365 (APAPTPQQAPPPPSL) the composition is skewed to pro residues. Residues 359–437 (APPPPSLVPL…SYDLGDLLIN (79 aa)) are transactivation. The interval 410–427 (DDYLWGLEAGEGISDLFD) is retinoblastoma protein binding.

It belongs to the E2F/DP family. As to quaternary structure, component of the DRTF1/E2F transcription factor complex. Forms heterodimers with DP family members. The E2F2 complex binds specifically hypophosphorylated retinoblastoma protein RB1. During the cell cycle, RB1 becomes phosphorylated in mid-to-late G1 phase, detaches from the DRTF1/E2F complex, rendering E2F transcriptionally active. Viral oncoproteins, notably E1A, T-antigen and HPV E7, are capable of sequestering RB1, thus releasing the active complex. Binds EAPP. In terms of processing, phosphorylated by CDK2 and cyclin A-CDK2 in the S-phase. In terms of tissue distribution, highest level of expression is found in placenta, low levels are found in lung. Found as well in many immortalized cell lines derived from tumor samples.

It localises to the nucleus. Functionally, transcription activator that binds DNA cooperatively with DP proteins through the E2 recognition site, 5'-TTTC[CG]CGC-3' found in the promoter region of a number of genes whose products are involved in cell cycle regulation or in DNA replication. The DRTF1/E2F complex functions in the control of cell-cycle progression from g1 to s phase. E2F2 binds specifically to RB1 in a cell-cycle dependent manner. In Homo sapiens (Human), this protein is Transcription factor E2F2 (E2F2).